The primary structure comprises 86 residues: Acyl carrier protein (86 aa).

A Carrier domain is found at 10 to 85; it reads DKIEQKVIEM…DVIKYIKERQ (76 aa). Ser45 carries the O-(pantetheine 4'-phosphoryl)serine modification.

The protein belongs to the acyl carrier protein (ACP) family. In terms of processing, 4'-phosphopantetheine is transferred from CoA to a specific serine of apo-ACP by AcpS. This modification is essential for activity because fatty acids are bound in thioester linkage to the sulfhydryl of the prosthetic group.

Its subcellular location is the cytoplasm. The protein operates within lipid metabolism; fatty acid biosynthesis. Carrier of the growing fatty acid chain in fatty acid biosynthesis. The chain is Acyl carrier protein from Rickettsia africae (strain ESF-5).